The primary structure comprises 172 residues: Trypsin inhibitor 1B (172 aa).

2 disulfides stabilise this stretch: Cys-40–Cys-84 and Cys-133–Cys-139.

This sequence belongs to the protease inhibitor I3 (leguminous Kunitz-type inhibitor) family.

WTI-1B inhibits trypsin stoichiometrically. The sequence is that of Trypsin inhibitor 1B from Psophocarpus tetragonolobus (Winged bean).